The primary structure comprises 131 residues: UPF0102 protein YraN (131 aa).

Positions 1-19 (MATVPTRSGSPRQLTTKQT) are enriched in polar residues. Positions 1 to 21 (MATVPTRSGSPRQLTTKQTGD) are disordered.

This sequence belongs to the UPF0102 family.

In Escherichia coli O7:K1 (strain IAI39 / ExPEC), this protein is UPF0102 protein YraN.